Reading from the N-terminus, the 325-residue chain is Gamma-hemolysin component B (325 aa).

The first 26 residues, 1–26 (MKMNKLVKSSVATSMALLLLSGTANA), serve as a signal peptide directing secretion.

It belongs to the aerolysin family. Toxicity requires sequential binding and synergistic association of a class S and a class F component which form heterooligomeric complexes. HlgB (class F) associates with either hlgA thus forming an AB toxin or with hlgC thus forming a CB toxin. Interacts with host AMFR.

The protein localises to the secreted. Its function is as follows. Toxin that seems to act by forming pores in the membrane of the cell. Has a hemolytic and a leucotoxic activity. Promotes host AMFR-mediated inflammation by mediating 'Lys-27'-linked ubiquitination of TAB3, TAK1-TAB3 complex formation and phosphorylation of TAK1/MAP3K7. In turn, activates host NF-kappa-B signaling pathway. The protein is Gamma-hemolysin component B (hlgB) of Staphylococcus aureus (strain NCTC 8325 / PS 47).